The following is a 368-amino-acid chain: Decarboxylase yanB (368 aa).

His-7, His-9, and His-159 together coordinate Zn(2+). N-linked (GlcNAc...) asparagine glycosylation is present at Asn-169. Asp-283 is a Zn(2+) binding site. Residues 339–359 (WGAFSACLLLPVGLSALYSVL) form a helical membrane-spanning segment.

Belongs to the metallo-dependent hydrolases superfamily. ACMSD family.

It localises to the membrane. It catalyses the reaction 6-methylsalicylate + H(+) = 3-methylphenol + CO2. Its pathway is secondary metabolite biosynthesis; terpenoid biosynthesis. Its function is as follows. Decarboxylase; part of the gene cluster that mediates the biosynthesis of yanuthone D, a fungal isoprenoid epoxycyclohexenone that acts as an antibiotic against fungi and bacteria. The first step of the pathway is the synthesis of 6-methylsalicylic acid (6-MSA) by the polyketide synthase yanA. 6-MSA is then converted to m-cresol by the decarboxylase yanB. The cytochrome P450 monooxygenase yanC then catalyzes the oxidation of m-cresol to toluquinol. Epoxidation of toluquinol is then performed by the short chain dehydrogenase yanD, with the help of yanE, and a further prenylation by yanG leads to 7-deacetoxyyanuthone A. The next step is the hydroxylation of C-22 of 7-deacetoxyyanuthone A by the cytochrome P450 monooxygenase yanH to yield 22-deacetylyanuthone A. O-Mevalon transferase yanI then attaches mevalon to the hydroxyl group of 22-deacetylyanuthone A to produce yanuthone E. Finally, the FAD-dependent monooxygenase yanF oxidizes the hydroxyl group at C15 of yanuthone E to form yanuthone D. Furthermore, several branching points in the pathway lead to the production of yanuthones F and G from 7-deacetoxyyanuthone A; yanuthones H and I from 22-deacetylyanuthone A; and yanuthone J from yanuthone E. This Aspergillus niger (strain ATCC 1015 / CBS 113.46 / FGSC A1144 / LSHB Ac4 / NCTC 3858a / NRRL 328 / USDA 3528.7) protein is Decarboxylase yanB.